The sequence spans 242 residues: Small ribosomal subunit protein uS2 (242 aa).

Belongs to the universal ribosomal protein uS2 family.

The protein is Small ribosomal subunit protein uS2 of Mannheimia succiniciproducens (strain KCTC 0769BP / MBEL55E).